A 1701-amino-acid polypeptide reads, in one-letter code: Merozoite surface protein 1 (1701 aa).

A signal peptide spans 1 to 19; sequence MKIIFFLCSFLFFIINTQC. Residues 89–100 show a composition bias toward gly residues; that stretch reads GSGGSVASGGSG. Positions 89-118 are disordered; it reads GSGGSVASGGSGNSRRTNPSDNSSDSNTKT. The segment covering 101 to 116 has biased composition (low complexity); that stretch reads NSRRTNPSDNSSDSNT. N-linked (GlcNAc...) asparagine glycans are attached at residues N110 and N239. Residues 322–344 are disordered; it reads DAENPTTGSKPNPLPENKKKEVE. 3 N-linked (GlcNAc...) asparagine glycosylation sites follow: N470, N536, and N607. The interval 704–739 is disordered; that stretch reads SETTEDGGHSTHTLSQSGETEVTEETEVTEETVGHT. Positions 724 to 733 are enriched in acidic residues; sequence EVTEETEVTE. N-linked (GlcNAc...) asparagine glycosylation is found at N802, N899, N919, N965, N991, N1089, and N1196. Residues 889-927 are compositionally biased toward low complexity; sequence TGTSSTSSPGNTTVNTAQSATHSNSQNQQSNASSTNTQN. The tract at residues 889–936 is disordered; sequence TGTSSTSSPGNTTVNTAQSATHSNSQNQQSNASSTNTQNGVAVSSGPA. 2 disordered regions span residues 1230 to 1259 and 1451 to 1472; these read TPPQ…TQIP and KEKF…DEQK. The span at 1245–1259 shows a compositional bias: polar residues; it reads VSGSSGSTKEETQIP. The span at 1456–1465 shows a compositional bias: pro residues; the sequence is SSPPTTPPSP. The N-linked (GlcNAc...) asparagine glycan is linked to N1588. 2 consecutive EGF-like domains span residues 1592 to 1632 and 1633 to 1680; these read HQCV…VENP and NPTC…IFCS. Intrachain disulfides connect C1594-C1605, C1599-C1615, C1617-C1628, C1636-C1649, C1643-C1663, and C1665-C1679. Residue S1680 is the site of GPI-anchor amidated serine attachment. A propeptide spans 1681-1701 (removed in mature form); it reads SSNFLGISFLLILMLILYSFI.

In terms of assembly, forms a complex composed of subunits p83, p30, p38, and p42 which remain non-covalently associated; the complex is formed at the merozoite surface prior to egress from host erythrocytes. Forms a complex composed of processed MSP1 subunits, MSP6 subunit p36 and MSP7; the complex is formed at the merozoite surface prior to egress from host erythrocytes. Within the complex, interacts (via subunit p38) with MSP6 subunit p36 and (via subunits p83, p30 and p38) with MSP7 (via subunit p22). Forms a complex composed of MSP1, MSP6, DBLMSP1 and DBLMSP2. Within the complex, interacts (via subunit p38) with DBLMSP1 and DBLMSP2. Forms a complex composed of MSP1, and rhoptry proteins RhopH3, RAP1 and CLAG9/RhopH3. Within the complex, interacts (via subunits p42 and p19) with RhopH3 (via C-terminus). Forms a complex composed of MSP1, MSP6, MSP7, MSP9 and MSP3; within the complex, MSP6 and MSP9 mediate the binding to the host erythrocyte. Interacts (via subunits p19 and p42) with MSP9; the interaction is direct; MSP1 subunits p19 or p42, and MSP9 form a co-ligand complex that interacts with host SLC4A1/Band 3 protein. May interact with PFD6. Interacts with host spectrin. Interacts with host glycophorin GYPA in a sialic acid-independent manner. As to quaternary structure, interacts with host proinflammatory cytokine S100P; the interaction blocks S100P inflammatory and chemotactic activities. In terms of assembly, interacts with host SLC4A1/Band 3 (via 5ABC region) on the host erythrocyte surface in a sialic acid-independent manner. The p190 precursor is cleaved by SUB1 prior to merozoite egress into 4 subunits p83, p30, p38, and p42 which remain non-covalently associated. SUB1-mediated proteolytic cleavage occurs in an orderly manner; the first cleavage occurs at the p30/p38 site, followed by cleavage at the p83/p30 site, the last cleavage occurs at the p38/p42 site. The order of cleavage is essential for parasite viability. SUB1-mediated processing is essential for merozoite egress. In a second processing step during erythrocyte invasion, p42 is cleaved by SUB2 into p33 and p19; the latter remains attached to the merozoite surface via its GPI-anchor and is endocytosed during the subsequent ring stage.

It is found in the cell membrane. It localises to the secreted. Its subcellular location is the vacuole membrane. Its function is as follows. During the asexual blood stage, involved in merozoite egress from host erythrocytes possibly via its interaction with the host cytoskeleton protein spectrin resulting in the destabilization of the host cytoskeleton and thus leading to erythrocyte cell membrane rupture. Involved in the binding to host erythrocytes and is required for host erythrocyte invasion. In terms of biological role, by binding to host proinflammatory cytokine S100P may interfere with host immune responses. Involved in merozoite invasion of host erythrocytes. May play a role in the biogenesis and/or function of the food vacuole during the intraerythrocytic development. In Plasmodium falciparum (isolate mad20 / Papua New Guinea), this protein is Merozoite surface protein 1.